A 464-amino-acid polypeptide reads, in one-letter code: UDP-glycosyltransferase 83A1 (464 aa).

Residues Ser-295, Ala-341 to Gln-343, His-358 to Glu-366, and Phe-380 to Gln-383 each bind UDP-alpha-D-glucose.

It belongs to the UDP-glycosyltransferase family.

In Arabidopsis thaliana (Mouse-ear cress), this protein is UDP-glycosyltransferase 83A1 (UGT83A1).